Reading from the N-terminus, the 384-residue chain is Monomeric sarcosine oxidase (384 aa).

6–36 (DVIVIGLGGMGSAAAHHLSARGARVLGLEKF) serves as a coordination point for FAD. At Cys315 the chain carries S-8alpha-FAD cysteine.

Belongs to the MSOX/MTOX family. MSOX subfamily. Monomer. It depends on FAD as a cofactor.

The protein resides in the cytoplasm. The enzyme catalyses sarcosine + O2 + H2O = formaldehyde + glycine + H2O2. In terms of biological role, catalyzes the oxidative demethylation of sarcosine. This is Monomeric sarcosine oxidase from Streptomyces avermitilis (strain ATCC 31267 / DSM 46492 / JCM 5070 / NBRC 14893 / NCIMB 12804 / NRRL 8165 / MA-4680).